A 445-amino-acid chain; its full sequence is ATP-dependent protease ATPase subunit HslU (445 aa).

Residues Val18, Gly60 to Glu65, Asp254, Glu319, and Arg391 each bind ATP.

Belongs to the ClpX chaperone family. HslU subfamily. In terms of assembly, a double ring-shaped homohexamer of HslV is capped on each side by a ring-shaped HslU homohexamer. The assembly of the HslU/HslV complex is dependent on binding of ATP.

It localises to the cytoplasm. ATPase subunit of a proteasome-like degradation complex; this subunit has chaperone activity. The binding of ATP and its subsequent hydrolysis by HslU are essential for unfolding of protein substrates subsequently hydrolyzed by HslV. HslU recognizes the N-terminal part of its protein substrates and unfolds these before they are guided to HslV for hydrolysis. The protein is ATP-dependent protease ATPase subunit HslU of Alcanivorax borkumensis (strain ATCC 700651 / DSM 11573 / NCIMB 13689 / SK2).